The sequence spans 218 residues: Peroxiredoxin-like 2A (218 aa).

Residues 3-101 (MWSIGAGAIG…DELGVPLYAV (99 aa)) are thioredoxin fold. Active-site redox-active residues include C74 and C77.

Belongs to the peroxiredoxin-like PRXL2 family. PRXL2A subfamily.

It localises to the cytoplasm. The protein localises to the secreted. Involved in redox regulation of the cell. Acts as an antioxidant. Inhibits TNFSF11-induced NFKB1 and JUN activation and osteoclast differentiation. May affect bone resorption and help to maintain bone mass. Acts as a negative regulator of macrophage-mediated inflammation by inhibiting macrophage production of inflammatory cytokines, probably through suppression of the MAPK signaling pathway. This chain is Peroxiredoxin-like 2A (PRXL2A), found in Bos taurus (Bovine).